We begin with the raw amino-acid sequence, 124 residues long: MANSGVMKLVCLVLACMVVAAPLAEAAITCGQVVSKLAPCLTYLRSGGAVPGTCCNAVKNLNNSAKTTPDRQTACGCLKNAYNSISGINAAYAGGLPAKCGVNLPYKISPSINCATYTLSLYNF.

The N-terminal stretch at 1 to 26 (MANSGVMKLVCLVLACMVVAAPLAEA) is a signal peptide. Intrachain disulfides connect Cys-30–Cys-77, Cys-40–Cys-54, Cys-55–Cys-100, and Cys-75–Cys-114.

Belongs to the plant LTP family.

Plant non-specific lipid-transfer proteins transfer phospholipids as well as galactolipids across membranes. May play a role in wax or cutin deposition in the cell walls of expanding epidermal cells and certain secretory tissues. The polypeptide is Non-specific lipid-transfer protein (Macadamia integrifolia (Macadamia nut)).